A 780-amino-acid polypeptide reads, in one-letter code: Protein phosphatase 1 regulatory subunit 21 (780 aa).

Coiled-coil stretches lie at residues 1-207 (MASA…LKTL) and 556-607 (ESRE…LKNT). Residues 84-104 (EPRGKKNKKSGESSSQLSQEQ) form a disordered region. A compositionally biased stretch (low complexity) spans 95–104 (ESSSQLSQEQ). Residue T652 is modified to Phosphothreonine. The stretch at 693 to 742 (YAECRALSKRLALAEKSKEALTEEMKLASQNISRLQDELTTTKRSYEDQL) forms a coiled coil. The interval 760 to 780 (REEIDTLKMSSKGNSKKNKSR) is disordered.

In terms of assembly, component of the FERRY complex, composed of five subunits: TBCK, PPP1R21, FERRY3, CRYZL1 and GATAD1, with a ratio of 1:2:1:2:4 respectively. PPP1R21 serves as a binding hub connecting all five complex subunits to mediate the binding to specific mitochondrial mRNAs. Interacts with the GTP-bound form of RAB5A (via its C-terminal region); linking the mRNP complex onto trafficking endosomes for active mRNA transport. Interacts with PPP1CA.

The protein localises to the early endosome. Functionally, component of the FERRY complex (Five-subunit Endosomal Rab5 and RNA/ribosome intermediary). The FERRY complex directly interacts with mRNAs and RAB5A, and functions as a RAB5A effector involved in the localization and the distribution of specific mRNAs most likely by mediating their endosomal transport. The complex recruits mRNAs and ribosomes to early endosomes through direct mRNA-interaction. In the complex, PPP1R21 serves as a binding hub connecting all five complex subunits and mediating the binding to mRNA and early endosomes via RAB5A. Putative regulator of protein phosphatase 1 (PP1) activity. May play a role in the endosomal sorting process or in endosome maturation pathway. The protein is Protein phosphatase 1 regulatory subunit 21 (PPP1R21) of Homo sapiens (Human).